Here is a 272-residue protein sequence, read N- to C-terminus: Ribosomal RNA small subunit methyltransferase A (272 aa).

6 residues coordinate S-adenosyl-L-methionine: asparagine 20, leucine 22, glycine 47, glutamate 68, aspartate 93, and asparagine 114.

Belongs to the class I-like SAM-binding methyltransferase superfamily. rRNA adenine N(6)-methyltransferase family. RsmA subfamily.

It localises to the cytoplasm. The catalysed reaction is adenosine(1518)/adenosine(1519) in 16S rRNA + 4 S-adenosyl-L-methionine = N(6)-dimethyladenosine(1518)/N(6)-dimethyladenosine(1519) in 16S rRNA + 4 S-adenosyl-L-homocysteine + 4 H(+). Its function is as follows. Specifically dimethylates two adjacent adenosines (A1518 and A1519) in the loop of a conserved hairpin near the 3'-end of 16S rRNA in the 30S particle. May play a critical role in biogenesis of 30S subunits. The chain is Ribosomal RNA small subunit methyltransferase A from Aliivibrio fischeri (strain ATCC 700601 / ES114) (Vibrio fischeri).